We begin with the raw amino-acid sequence, 497 residues long: Signal recognition particle subunit SRP54 2 (497 aa).

Positions Met1 to Leu295 are G-domain. GTP is bound by residues Gly108–Thr115, Asp190–Arg194, and Thr248–Asp251. Positions Gly296 to Asp497 are M-domain.

It belongs to the GTP-binding SRP family. SRP54 subfamily. Component of a signal recognition particle (SRP) complex that consists of a 7SL RNA molecule of 300 nucleotides and six protein subunits: SRP72, SRP68, SRP54, SRP19, SRP14 and SRP9.

The protein resides in the cytoplasm. It localises to the endoplasmic reticulum. It catalyses the reaction GTP + H2O = GDP + phosphate + H(+). Its function is as follows. Component of the signal recognition particle (SRP) complex, a ribonucleoprotein complex that mediates the cotranslational targeting of secretory and membrane proteins to the endoplasmic reticulum (ER). As part of the SRP complex, associates with the SRP receptor (SR) component SRPRA to target secretory proteins to the endoplasmic reticulum membrane. Binds to the signal sequence of presecretory proteins when they emerge from the ribosomes. Displays basal GTPase activity, and stimulates reciprocal GTPase activation of the SR subunit SRPRA. Forms a guanosine 5'-triphosphate (GTP)-dependent complex with the SR subunit SRPRA. SR compaction and GTPase mediated rearrangement of SR drive SRP-mediated cotranslational protein translocation into the ER. Requires the presence of SRP9/SRP14 and/or SRP19 to stably interact with RNA. The sequence is that of Signal recognition particle subunit SRP54 2 (SRP54-2) from Hordeum vulgare (Barley).